The primary structure comprises 474 residues: Replication-associated protein (474 aa).

The short motif at 248 to 255 (GKRFQEDR) is the Nuclear localization signal element. A disordered region spans residues 455–474 (AFAPGFSLTSEPEPKRRRFF).

It localises to the host nucleus. Functionally, plays an essential for the replication of viral DNA. Presumably cleaves viral genomic dsRNA replicative form to initiate rolling circle replication. The polypeptide is Replication-associated protein (Avon-Heathcote Estuary associated kieseladnavirus (AHEaBV)).